A 273-amino-acid polypeptide reads, in one-letter code: 4-hydroxy-tetrahydrodipicolinate reductase (273 aa).

NAD(+)-binding positions include 12 to 17 and Glu38; that span reads GAGGRM. An NADP(+)-binding site is contributed by Arg39. NAD(+) contacts are provided by residues 102–104 and 126–129; these read GTT and AANF. His159 acts as the Proton donor/acceptor in catalysis. Residue His160 participates in (S)-2,3,4,5-tetrahydrodipicolinate binding. The Proton donor role is filled by Lys163. 169 to 170 contacts (S)-2,3,4,5-tetrahydrodipicolinate; sequence GT.

Belongs to the DapB family. In terms of assembly, homotetramer.

Its subcellular location is the cytoplasm. The catalysed reaction is (S)-2,3,4,5-tetrahydrodipicolinate + NAD(+) + H2O = (2S,4S)-4-hydroxy-2,3,4,5-tetrahydrodipicolinate + NADH + H(+). It catalyses the reaction (S)-2,3,4,5-tetrahydrodipicolinate + NADP(+) + H2O = (2S,4S)-4-hydroxy-2,3,4,5-tetrahydrodipicolinate + NADPH + H(+). It functions in the pathway amino-acid biosynthesis; L-lysine biosynthesis via DAP pathway; (S)-tetrahydrodipicolinate from L-aspartate: step 4/4. Its function is as follows. Catalyzes the conversion of 4-hydroxy-tetrahydrodipicolinate (HTPA) to tetrahydrodipicolinate. This Yersinia pseudotuberculosis serotype O:1b (strain IP 31758) protein is 4-hydroxy-tetrahydrodipicolinate reductase.